A 352-amino-acid polypeptide reads, in one-letter code: Quinolinate synthase (352 aa).

Iminosuccinate is bound by residues His-48 and Ser-69. Cys-114 is a binding site for [4Fe-4S] cluster. Iminosuccinate contacts are provided by residues 140–142 and Ser-157; that span reads YAN. Cys-201 lines the [4Fe-4S] cluster pocket. Iminosuccinate contacts are provided by residues 227–229 and Thr-244; that span reads HPE. Cys-298 serves as a coordination point for [4Fe-4S] cluster.

It belongs to the quinolinate synthase family. Type 1 subfamily. [4Fe-4S] cluster is required as a cofactor.

Its subcellular location is the cytoplasm. The enzyme catalyses iminosuccinate + dihydroxyacetone phosphate = quinolinate + phosphate + 2 H2O + H(+). Its pathway is cofactor biosynthesis; NAD(+) biosynthesis; quinolinate from iminoaspartate: step 1/1. Functionally, catalyzes the condensation of iminoaspartate with dihydroxyacetone phosphate to form quinolinate. The chain is Quinolinate synthase from Pseudomonas putida (strain GB-1).